An 86-amino-acid chain; its full sequence is Large ribosomal subunit protein uL23 (86 aa).

It belongs to the universal ribosomal protein uL23 family. In terms of assembly, part of the 50S ribosomal subunit. Contacts protein L29.

In terms of biological role, binds to 23S rRNA. One of the proteins that surrounds the polypeptide exit tunnel on the outside of the ribosome. The chain is Large ribosomal subunit protein uL23 from Methanocaldococcus jannaschii (strain ATCC 43067 / DSM 2661 / JAL-1 / JCM 10045 / NBRC 100440) (Methanococcus jannaschii).